A 188-amino-acid polypeptide reads, in one-letter code: Ribosome-recycling factor (188 aa).

The protein belongs to the RRF family.

The protein localises to the cytoplasm. Responsible for the release of ribosomes from messenger RNA at the termination of protein biosynthesis. May increase the efficiency of translation by recycling ribosomes from one round of translation to another. This chain is Ribosome-recycling factor, found in Caulobacter sp. (strain K31).